The sequence spans 278 residues: Small ribosomal subunit protein uS9m (278 aa).

Residues 1–10 constitute a mitochondrion transit peptide; that stretch reads MFSRLSLFRR. The segment at 259 to 278 is disordered; sequence VERKKPGKKKARKMPTWVKR.

Belongs to the universal ribosomal protein uS9 family. In terms of assembly, component of the mitochondrial small ribosomal subunit (mt-SSU). Mature yeast 74S mitochondrial ribosomes consist of a small (37S) and a large (54S) subunit. The 37S small subunit contains a 15S ribosomal RNA (15S mt-rRNA) and 34 different proteins. The 54S large subunit contains a 21S rRNA (21S mt-rRNA) and 46 different proteins.

It localises to the mitochondrion. Component of the mitochondrial ribosome (mitoribosome), a dedicated translation machinery responsible for the synthesis of mitochondrial genome-encoded proteins, including at least some of the essential transmembrane subunits of the mitochondrial respiratory chain. The mitoribosomes are attached to the mitochondrial inner membrane and translation products are cotranslationally integrated into the membrane. This chain is Small ribosomal subunit protein uS9m (MRPS9), found in Saccharomyces cerevisiae (strain ATCC 204508 / S288c) (Baker's yeast).